The sequence spans 91 residues: Large ribosomal subunit protein bL31B (91 aa).

The protein belongs to the bacterial ribosomal protein bL31 family. Type B subfamily. In terms of assembly, part of the 50S ribosomal subunit.

In Neisseria meningitidis serogroup A / serotype 4A (strain DSM 15465 / Z2491), this protein is Large ribosomal subunit protein bL31B.